We begin with the raw amino-acid sequence, 158 residues long: Endoribonuclease YbeY (158 aa).

3 residues coordinate Zn(2+): H124, H128, and H134.

This sequence belongs to the endoribonuclease YbeY family. The cofactor is Zn(2+).

It localises to the cytoplasm. Its function is as follows. Single strand-specific metallo-endoribonuclease involved in late-stage 70S ribosome quality control and in maturation of the 3' terminus of the 16S rRNA. The chain is Endoribonuclease YbeY from Caldanaerobacter subterraneus subsp. tengcongensis (strain DSM 15242 / JCM 11007 / NBRC 100824 / MB4) (Thermoanaerobacter tengcongensis).